Here is a 192-residue protein sequence, read N- to C-terminus: Peptidyl-tRNA hydrolase (192 aa).

His19 (proton acceptor) is an active-site residue. Residues Tyr64, Asn66, and Asn112 each coordinate tRNA.

This sequence belongs to the PTH family. In terms of assembly, monomer.

The protein resides in the cytoplasm. The catalysed reaction is an N-acyl-L-alpha-aminoacyl-tRNA + H2O = an N-acyl-L-amino acid + a tRNA + H(+). Functionally, hydrolyzes ribosome-free peptidyl-tRNAs (with 1 or more amino acids incorporated), which drop off the ribosome during protein synthesis, or as a result of ribosome stalling. Its function is as follows. Catalyzes the release of premature peptidyl moieties from peptidyl-tRNA molecules trapped in stalled 50S ribosomal subunits, and thus maintains levels of free tRNAs and 50S ribosomes. In Acidiphilium cryptum (strain JF-5), this protein is Peptidyl-tRNA hydrolase.